Reading from the N-terminus, the 229-residue chain is Phosphatidylinositol N-acetylglucosaminyltransferase subunit GPI15 (229 aa).

A run of 2 helical transmembrane segments spans residues I59 to L79 and I101 to V121.

The protein belongs to the PIGH family. Component of the phosphatidylinositol N-acetylglucosaminyltransferase (GPI-GlcNAc transferase) complex composed of at least GPI1, GPI2, GPI3, GPI15, GPI19 and ERI1.

The protein resides in the membrane. It carries out the reaction a 1,2-diacyl-sn-glycero-3-phospho-(1D-myo-inositol) + UDP-N-acetyl-alpha-D-glucosamine = a 6-(N-acetyl-alpha-D-glucosaminyl)-1-(1,2-diacyl-sn-glycero-3-phospho)-1D-myo-inositol + UDP + H(+). It functions in the pathway glycolipid biosynthesis; glycosylphosphatidylinositol-anchor biosynthesis. Part of the complex catalyzing the transfer of N-acetylglucosamine from UDP-N-acetylglucosamine to phosphatidylinositol, the first step of GPI biosynthesis. The chain is Phosphatidylinositol N-acetylglucosaminyltransferase subunit GPI15 (GPI15) from Saccharomyces cerevisiae (strain ATCC 204508 / S288c) (Baker's yeast).